Consider the following 189-residue polypeptide: Elongation factor P (189 aa).

Position 34 is an N6-(3,6-diaminohexanoyl)-5-hydroxylysine (lysine 34).

It belongs to the elongation factor P family. May be beta-lysylated on the epsilon-amino group of Lys-34 by the combined action of EpmA and EpmB, and then hydroxylated on the C5 position of the same residue by EpmC (if this protein is present). Lysylation is critical for the stimulatory effect of EF-P on peptide-bond formation. The lysylation moiety may extend toward the peptidyltransferase center and stabilize the terminal 3-CCA end of the tRNA. Hydroxylation of the C5 position on Lys-34 may allow additional potential stabilizing hydrogen-bond interactions with the P-tRNA.

It is found in the cytoplasm. It functions in the pathway protein biosynthesis; polypeptide chain elongation. Its function is as follows. Involved in peptide bond synthesis. Alleviates ribosome stalling that occurs when 3 or more consecutive Pro residues or the sequence PPG is present in a protein, possibly by augmenting the peptidyl transferase activity of the ribosome. Modification of Lys-34 is required for alleviation. This is Elongation factor P from Alkalilimnicola ehrlichii (strain ATCC BAA-1101 / DSM 17681 / MLHE-1).